The primary structure comprises 235 residues: Transmembrane protein 215 (235 aa).

Transmembrane regions (helical) follow at residues 12 to 32 (LVVALVSVFLVFGFMFTVSGM) and 40 to 60 (IPLLAIGPAICLPGIAAIALA). The interval 99–146 (SDLESGKGSSDELAKKAGLRGKQLPQGPGEVPMASSVTTPTPTEEGEC) is disordered.

The protein resides in the membrane. The chain is Transmembrane protein 215 (Tmem215) from Mus musculus (Mouse).